A 102-amino-acid chain; its full sequence is NADH-quinone oxidoreductase subunit K (102 aa).

A run of 3 helical transmembrane segments spans residues 5-25 (LSHFLIVAAMLFTIGVAGIIL), 30-50 (IIVVLMSVELILLSVNINLVS), and 62-82 (VFSLFVLTVAAAEAAIGLAIL).

The protein belongs to the complex I subunit 4L family. NDH-1 is composed of 14 different subunits. Subunits NuoA, H, J, K, L, M, N constitute the membrane sector of the complex.

It localises to the cell inner membrane. The catalysed reaction is a quinone + NADH + 5 H(+)(in) = a quinol + NAD(+) + 4 H(+)(out). NDH-1 shuttles electrons from NADH, via FMN and iron-sulfur (Fe-S) centers, to quinones in the respiratory chain. The immediate electron acceptor for the enzyme in this species is believed to be ubiquinone. Couples the redox reaction to proton translocation (for every two electrons transferred, four hydrogen ions are translocated across the cytoplasmic membrane), and thus conserves the redox energy in a proton gradient. The polypeptide is NADH-quinone oxidoreductase subunit K (Methylocella silvestris (strain DSM 15510 / CIP 108128 / LMG 27833 / NCIMB 13906 / BL2)).